A 102-amino-acid polypeptide reads, in one-letter code: MESQNIRIRLKAFDHRVLDQSTSEIVNTAKRTGARVRGPIPLPTQIEKFTVNRSPHIDKKSREQFEIRTHKRLLDIVDPTPQTVDALMKLDLAAGVDVEIKI.

Belongs to the universal ribosomal protein uS10 family. Part of the 30S ribosomal subunit.

In terms of biological role, involved in the binding of tRNA to the ribosomes. The chain is Small ribosomal subunit protein uS10 from Rhodospirillum centenum (strain ATCC 51521 / SW).